The chain runs to 342 residues: Anthranilate phosphoribosyltransferase (342 aa).

Residues glycine 79, 82 to 83 (GD), threonine 87, 89 to 92 (NIST), 107 to 115 (KHCNQRISS), and serine 119 contribute to the 5-phospho-alpha-D-ribose 1-diphosphate site. Glycine 79 lines the anthranilate pocket. A Mg(2+)-binding site is contributed by serine 91. Residue asparagine 110 participates in anthranilate binding. Residue arginine 165 coordinates anthranilate. Mg(2+) is bound by residues aspartate 223 and glutamate 224.

This sequence belongs to the anthranilate phosphoribosyltransferase family. As to quaternary structure, homodimer. The cofactor is Mg(2+).

The enzyme catalyses N-(5-phospho-beta-D-ribosyl)anthranilate + diphosphate = 5-phospho-alpha-D-ribose 1-diphosphate + anthranilate. It functions in the pathway amino-acid biosynthesis; L-tryptophan biosynthesis; L-tryptophan from chorismate: step 2/5. In terms of biological role, catalyzes the transfer of the phosphoribosyl group of 5-phosphorylribose-1-pyrophosphate (PRPP) to anthranilate to yield N-(5'-phosphoribosyl)-anthranilate (PRA). This Buchnera aphidicola subsp. Acyrthosiphon pisum (strain Tuc7) protein is Anthranilate phosphoribosyltransferase.